The sequence spans 473 residues: Cell division protein FtsP (473 aa).

The segment at residues 1–27 (MSFSRRQFLQASGLAVCLGSLSSSVRA) is a signal peptide (tat-type signal).

It belongs to the FtsP family. In terms of processing, predicted to be exported by the Tat system. The position of the signal peptide cleavage has not been experimentally proven.

It localises to the periplasm. Cell division protein that is required for growth during stress conditions. May be involved in protecting or stabilizing the divisomal assembly under conditions of stress. This chain is Cell division protein FtsP, found in Proteus mirabilis (strain HI4320).